A 488-amino-acid polypeptide reads, in one-letter code: MSDITTLSLTALRDKLARKELSAVEAASACLARIEATEPKIHALLHCDAEAALAAAKALDAAGPNPDQRLWGVPVLVKDAICVKDAPTTCGSKILENFTPFYDASCIEKMRAAGAVILGKANMDEFAMGSSTENSAYKVTANPWDLGKVPGGSSGGSAAAVAAGQCFAALGTDTGGSIRQPAAFCGTVGIKPTYGRVSRYGLVAYGSSLDQIGPLTRTADDAAAVLGVIAGPDPKDSTCAPRDVPDFEAALAGAADLAGLTIGLPDEYWGEGVDAEVRDACRAAVDTAKSLGANVVPVSLPHTPYAVATYYIVAMAEASSNLARFDGVRYGYRAPEAQSLEELYELSRSKGFGPEVQRRIVIGAYVLSAGYYDAYYRKAAQVRRLIRQDFLNAFEKCDVICGPTSPFAAFTIGQMSDDPLQMYLSDIFTISLNLAGLPGLSMPVGLGTTSAMPIGMQLFGRAFDEATILRTAKVLGNALPPLPQPAAV.

Catalysis depends on charge relay system residues lysine 78 and serine 153. The active-site Acyl-ester intermediate is serine 177.

The protein belongs to the amidase family. GatA subfamily. Heterotrimer of A, B and C subunits.

The catalysed reaction is L-glutamyl-tRNA(Gln) + L-glutamine + ATP + H2O = L-glutaminyl-tRNA(Gln) + L-glutamate + ADP + phosphate + H(+). Its function is as follows. Allows the formation of correctly charged Gln-tRNA(Gln) through the transamidation of misacylated Glu-tRNA(Gln) in organisms which lack glutaminyl-tRNA synthetase. The reaction takes place in the presence of glutamine and ATP through an activated gamma-phospho-Glu-tRNA(Gln). The polypeptide is Glutamyl-tRNA(Gln) amidotransferase subunit A (Solidesulfovibrio magneticus (strain ATCC 700980 / DSM 13731 / RS-1) (Desulfovibrio magneticus)).